We begin with the raw amino-acid sequence, 190 residues long: dCTP deaminase (190 aa).

A dCTP-binding site is contributed by 113–118 (KSTYAR). Glu139 acts as the Proton donor/acceptor in catalysis. Residues Gln158, Tyr172, Lys181, and Gln182 each contribute to the dCTP site.

Belongs to the dCTP deaminase family. As to quaternary structure, homotrimer.

The enzyme catalyses dCTP + H2O + H(+) = dUTP + NH4(+). It participates in pyrimidine metabolism; dUMP biosynthesis; dUMP from dCTP (dUTP route): step 1/2. Functionally, catalyzes the deamination of dCTP to dUTP. This chain is dCTP deaminase, found in Chlamydia muridarum (strain MoPn / Nigg).